The sequence spans 711 residues: Polyribonucleotide nucleotidyltransferase (711 aa).

The Mg(2+) site is built by D490 and D496. The region spanning 556 to 615 (PRIETMQVPTDKIREVIGSGGKVIREIVEVSGAKVDINDDGVIKIASANGEAIQKAYDMI) is the KH domain. Residues 625 to 693 (GAVYTGKVVK…DRGKVRLSMK (69 aa)) form the S1 motif domain.

Belongs to the polyribonucleotide nucleotidyltransferase family. Mg(2+) serves as cofactor.

The protein resides in the cytoplasm. It carries out the reaction RNA(n+1) + phosphate = RNA(n) + a ribonucleoside 5'-diphosphate. In terms of biological role, involved in mRNA degradation. Catalyzes the phosphorolysis of single-stranded polyribonucleotides processively in the 3'- to 5'-direction. This Ruegeria sp. (strain TM1040) (Silicibacter sp.) protein is Polyribonucleotide nucleotidyltransferase.